The sequence spans 190 residues: GATA transcription factor 17 (190 aa).

Over residues 1-14 (MSEGSEDTKTKLDS) the composition is skewed to basic and acidic residues. 2 disordered regions span residues 1-42 (MSEG…DTKR) and 77-101 (RQAA…NDLN). The GATA-type zinc-finger motif lies at 38-92 (GDTKRTCVDCGTIRTPLWRGGPAGPKSLCNACGIKSRKKRQAALGMRSEEKKKNR).

It belongs to the type IV zinc-finger family. Class B subfamily.

The protein localises to the nucleus. In terms of biological role, transcriptional regulator that specifically binds 5'-GATA-3' or 5'-GAT-3' motifs within gene promoters. This chain is GATA transcription factor 17 (GATA17), found in Arabidopsis thaliana (Mouse-ear cress).